A 242-amino-acid polypeptide reads, in one-letter code: Small ribosomal subunit protein uS2 (242 aa).

The protein belongs to the universal ribosomal protein uS2 family.

The protein is Small ribosomal subunit protein uS2 of Shewanella frigidimarina (strain NCIMB 400).